Consider the following 828-residue polypeptide: ADP-ribosylation factor GTPase-activating protein AGD1 (828 aa).

One can recognise a BAR domain in the interval 1–225 (MHFAKLDDSP…INQVLAYAHQ (225 aa)). Residues 225-255 (QSRECANYEMASLNERMQEYQRQVDRETRNS) are a coiled coil. Residues 247 to 268 (QVDRETRNSCVSPTGDGMRHNS) form a disordered region. A PH domain is found at 288–425 (QTIRQGYLSK…WIEKITGVIA (138 aa)). Phosphoserine is present on S441. An Arf-GAP domain is found at 498 to 643 (EKPIDVLTRV…IFVRKAIDSQ (146 aa)). The C4-type zinc-finger motif lies at 513-536 (CADCGAPEPDWASLNLGVLICIEC). The segment covering 590-600 (TSSASRSSGTP) has biased composition (low complexity). Residues 590–611 (TSSASRSSGTPKSDRPRKLLVR) are disordered. ANK repeat units follow at residues 735-764 (NDCS…KINA) and 768-797 (KGRT…DPNA).

Expressed in roots, but not in hypocotyls or cotyledons. Low levels detected in leaf and shoot apical meristems and in siliques.

It is found in the endosome. Its function is as follows. Probable GTPase-activating protein. Regulator of membrane trafficking. Required for maintaining a straight growth of root hairs. This is ADP-ribosylation factor GTPase-activating protein AGD1 (AGD1) from Arabidopsis thaliana (Mouse-ear cress).